The chain runs to 485 residues: Cysteine--tRNA ligase (485 aa).

Cys-27 lines the Zn(2+) pocket. The short motif at 29–39 is the 'HIGH' region element; the sequence is ITAYDLCHIGH. The Zn(2+) site is built by Cys-208, His-233, and Glu-237. A 'KMSKS' region motif is present at residues 265 to 269; the sequence is KMSKS. Residue Lys-268 participates in ATP binding.

This sequence belongs to the class-I aminoacyl-tRNA synthetase family. Monomer. Zn(2+) is required as a cofactor.

The protein localises to the cytoplasm. It catalyses the reaction tRNA(Cys) + L-cysteine + ATP = L-cysteinyl-tRNA(Cys) + AMP + diphosphate. This Nitratidesulfovibrio vulgaris (strain DSM 19637 / Miyazaki F) (Desulfovibrio vulgaris) protein is Cysteine--tRNA ligase.